A 56-amino-acid chain; its full sequence is MGVPQRRQSHARKNKRRSEWRKIDKPGLVECPQCHELKMPHRACLNCGYYKSNKVM.

The disordered stretch occupies residues 1–21 (MGVPQRRQSHARKNKRRSEWR). The segment covering 7-19 (RQSHARKNKRRSE) has biased composition (basic residues).

The protein belongs to the bacterial ribosomal protein bL32 family.

The chain is Large ribosomal subunit protein bL32 from Syntrophomonas wolfei subsp. wolfei (strain DSM 2245B / Goettingen).